Consider the following 649-residue polypeptide: MSAPTLDVESPLAASTSSLRAMNMVSSHTTVAKDEIYDLLGIGFGPAHLALSISLRESSEANETNFKAHFLEKRGHFAWHPALLLPGSQLQVSPLKDLVTLRDPASTYSFYNYLHSHGRLARYINKEQGVPSRREWTSYLAWAARRMNQAVSYGQDVISIEPLALASASPDAKQDTVAVRPASAQEADSLCLYQVRIRDESTGHIVNRYARNLSVAVGGVPKLPPAFQAAWDEQQRAPHSIPRLVHSGFYIPSMLKLEPELHKAASLRHPDAAAQLDDSSRLRLAVIGAGQSSTEMFMNLHSRFPSAIVTMIFRASALVPSDDTGFVNSAAFDPERTDEFWQASETQRRKWLQEFKRTNYSVVRTDLLNELHDAMYDKYEVQLPEELQDPTEKQAGRMEMRRCTEVVEVTPLDDGIQLTMRDNLRNAKLETIRFDAVFLGTGFIRSPSKMRFLEQLKPFYPALDAEWMSRDTIAEEDEVSKSIDVEDEEVIERRREMLRGITRDYRLVPASAMQSDAVRSGKSSPGSGSDASSTSSQQTLASENSTENLPEASLYVLGGNEATHGLSDSLLSIVAHRAGELTTSLLQRLPRTRRGTASSAATQPAASTVASAAKTSPTVSVTQTKARQAAQVVNDKLAALSGLHLDATS.

FAD-binding positions include 72–80 (EKRGHFAWH) and Gln91. Position 96 (Lys96) interacts with substrate. Position 157 (Val157) interacts with FAD. Residues 289 to 292 (AGQS) and Arg314 contribute to the NADP(+) site. Substrate is bound by residues 328–331 (NSAA) and Asn359. 359-361 (NYS) lines the NADP(+) pocket. The segment at 512-547 (AMQSDAVRSGKSSPGSGSDASSTSSQQTLASENSTE) is disordered. The segment covering 520-536 (SGKSSPGSGSDASSTSS) has biased composition (low complexity). A compositionally biased stretch (polar residues) spans 537-547 (QQTLASENSTE). 569-571 (SLL) provides a ligand contact to FAD. Residue Ser572 participates in substrate binding. The interval 585–611 (LLQRLPRTRRGTASSAATQPAASTVAS) is disordered. Residues 596-611 (TASSAATQPAASTVAS) are compositionally biased toward low complexity.

This sequence belongs to the lysine N(6)-hydroxylase/L-ornithine N(5)-oxygenase family. In terms of assembly, homotetramer. The cofactor is FAD.

It carries out the reaction L-ornithine + NADPH + O2 = N(5)-hydroxy-L-ornithine + NADP(+) + H2O. The catalysed reaction is L-ornithine + NADH + O2 = N(5)-hydroxy-L-ornithine + NAD(+) + H2O. It functions in the pathway siderophore biosynthesis; ferrichrome biosynthesis. Functionally, catalyzes the conversion of L-ornithine to N(5)-hydroxyornithine, the first step in the biosynthesis of all hydroxamate-containing siderophores, such as ferrichrome. In Mycosarcoma maydis (Corn smut fungus), this protein is L-ornithine N(5)-monooxygenase (SID1).